Here is a 492-residue protein sequence, read N- to C-terminus: Probable cytochrome P450 513A3 (492 aa).

The helical transmembrane segment at 1–21 (MTSLTLYLIIFSIILYLFVNR) threads the bilayer. Cysteine 437 lines the heme pocket.

It belongs to the cytochrome P450 family. Heme serves as cofactor.

The protein localises to the membrane. This Dictyostelium discoideum (Social amoeba) protein is Probable cytochrome P450 513A3 (cyp513A3).